The primary structure comprises 133 residues: Small ribosomal subunit protein uS11 (133 aa).

It belongs to the universal ribosomal protein uS11 family. In terms of assembly, part of the 30S ribosomal subunit. Interacts with proteins S7 and S18. Binds to IF-3.

In terms of biological role, located on the platform of the 30S subunit, it bridges several disparate RNA helices of the 16S rRNA. Forms part of the Shine-Dalgarno cleft in the 70S ribosome. In Brevibacillus brevis (strain 47 / JCM 6285 / NBRC 100599), this protein is Small ribosomal subunit protein uS11.